Here is a 341-residue protein sequence, read N- to C-terminus: Ras association domain-containing protein 6 (341 aa).

Phosphoserine is present on S155. The Ras-associating domain maps to Y190–A278. One can recognise an SARAH domain in the interval V285–K332.

As to quaternary structure, interacts with MOAP1. Interaction with activated KRAS is still a matter of debate.

Functionally, involved in the induction of apoptosis. May act as a Ras effector protein. May suppress the serum-induced basal levels of NF-kappa-B. This Rattus norvegicus (Rat) protein is Ras association domain-containing protein 6 (Rassf6).